Here is a 428-residue protein sequence, read N- to C-terminus: MSNLKEVQDNITTHEQQLVAARQKLKDAERTVGVDPDDVNKSTLQNRRAAVSALEAKIGELKRQLADLVAAQKLATKSVDPTGIEPDDHLKEKSSLRYGNVLDVNSIDLEEPSGQTADWKAIGTYILSFVLPIVLKALYMLSTRGRQTVKENKGTRIRFKDDSSYEDVNGIRKPKHLYVSLPTAQSTMKADEITPGRFRTIVCGLFPAQIKARNIISPVMGVIGFSFFVKDWVDKIEDFLRAECPFLPKPRAQAESFLSTNGAYFMNRQTQVEESKVQDILDLIDTAESGGATLFDNIASPQSAWIFACAPDRCPPTALYVAGVPELGAFFSILQDMRNTIMASKSVGTAEEKLKKKSAFYQSYLRRTQSMGIQLDQKIIILYMINWGKEAVNHFHLGDDMDPELRQLAQALVDTKVKEISNQEPLKI.

The interval 1–50 (MSNLKEVQDNITTHEQQLVAARQKLKDAERTVGVDPDDVNKSTLQNRRAA) is rdRP binding. 2 homomultimerization regions span residues 1 to 79 (MSNL…TKSV) and 100 to 125 (NVLD…IGTY). Positions 1-100 (MSNLKEVQDN…KEKSSLRYGN (100 aa)) are chaperone activity. Residues 1-175 (MSNLKEVQDN…EDVNGIRKPK (175 aa)) are viral panhandle binding. Residues 4–71 (LKEVQDNITT…KRQLADLVAA (68 aa)) are a coiled coil. The tract at residues 80–248 (DPTGIEPDDH…FLRAECPFLP (169 aa)) is interaction with glycoprotein N. The segment at 150-175 (KENKGTRIRFKDDSSYEDVNGIRKPK) is interaction with host RPS19. The viral RNA-binding stretch occupies residues 175 to 217 (KHLYVSLPTAQSTMKADEITPGRFRTIVCGLFPAQIKARNIIS). The YxxL motif lies at 178–181 (YVSL). The interval 188–191 (MKAD) is interaction with host UBE2I/UBC9. Positions 372 to 420 (GIQLDQKIIILYMINWGKEAVNHFHLGDDMDPELRQLAQALVDTKVKEI) are homomultimerization. Residues 372–428 (GIQLDQKIIILYMINWGKEAVNHFHLGDDMDPELRQLAQALVDTKVKEISNQEPLKI) form an interaction with host DAXX region.

The protein belongs to the hantavirus nucleocapsid protein family. Homotrimer. Homomultimer. Homomultimerizes and binds to viral genomic RNA to form the nucleocapsid. Interacts with host MAP1LC3B; this interaction participates to the protection of Gn from virus-triggered autophagy. Interacts with host SNAP29; this interaction participates to the protection of glycoprotein N from virus-triggered autophagy. Interacts (via N-terminus) with host RPS19; this interaction probably mediates the loading of the 40S ribosomal subunit on viral capped mRNA during N-mediated translation initiation. Interacts with the viral RdRp. Interacts with host SUMO1 (via N-terminus). Interacts with host DAXX. Interacts with the viral glycoprotein N (via C-terminus). Interacts with the viral glycoprotein C (via C-terminus).

The protein resides in the virion. The protein localises to the host cytoplasm. Its subcellular location is the host perinuclear region. It localises to the host Golgi apparatus. It is found in the host cis-Golgi network. Functionally, encapsidates the genome protecting it from nucleases. The encapsidated genomic RNA is termed the nucleocapsid (NC) and serves as template for transcription and replication. The nucleocapsid has a left-handed helical structure. As a trimer, specifically binds and acts as a chaperone to unwind the panhandle structure formed by the viral RNA (vRNA) termini. Involved in the transcription and replication initiation of vRNA by mediating primer annealing. Plays a role in cap snatching by sequestering capped RNAs in P bodies for use by the viral RdRp during transcription initiation. Substitutes for the cellular cap-binding complex (eIF4F) to preferentially facilitate the translation of capped mRNAs. Initiates the translation by specifically binding to the cap and 40S ribosomal subunit. Prevents the viral glycoprotein N (Gn) from autophagy-dependent breakdown maybe by blocking autophagosome formation. Inhibits host EIF2AK2/PKR dimerization to prevent PKR-induced translational shutdown in cells and thus the activation of the antiviral state. Also displays sequence-unspecific DNA endonuclease activity. In Homo sapiens (Human), this protein is Nucleoprotein (N).